Consider the following 216-residue polypeptide: Dephospho-CoA kinase (216 aa).

In terms of domain architecture, DPCK spans 18–216 (IIGVIGPPCS…SELASVLQSK (199 aa)). 26–31 (CSGKST) contacts ATP.

Belongs to the CoaE family.

The protein resides in the cytoplasm. It carries out the reaction 3'-dephospho-CoA + ATP = ADP + CoA + H(+). The protein operates within cofactor biosynthesis; coenzyme A biosynthesis; CoA from (R)-pantothenate: step 5/5. Its function is as follows. Catalyzes the phosphorylation of the 3'-hydroxyl group of dephosphocoenzyme A to form coenzyme A. This Rhodopirellula baltica (strain DSM 10527 / NCIMB 13988 / SH1) protein is Dephospho-CoA kinase.